We begin with the raw amino-acid sequence, 766 residues long: Oligopeptide transporter 7 (766 aa).

The disordered stretch occupies residues 1-58 (MEESEQVLPLLTNPKDLTNPSYASSSSSSSEPRDETEDLLLPISDENEEEEEENSPIR). Over residues 45-54 (DENEEEEEEN) the composition is skewed to acidic residues. 15 helical membrane-spanning segments follow: residues 79–99 (MWVL…FFWY), 104–124 (LTIS…LMAA), 154–174 (ITIF…VTVV), 184–204 (FFVS…WAGI), 247–267 (FVIA…LFQI), 287–307 (IGSG…STIS), 324–344 (VGVG…WLDV), 390–410 (LCTF…ATIM), 446–466 (VPEW…IFAC), 477–497 (WWGV…IGII), 509–529 (IITE…NMCF), 561–581 (FMAQ…TAWW), 627–647 (LYKS…LVWL), 676–696 (ATAV…FVVF), and 709–729 (VLSG…YMCL).

This sequence belongs to the oligopeptide OPT transporter (TC 2.A.67.1) family. As to expression, expressed in the major and the first-order veins and in the hydathodes of the leaves. In the roots, expressed in circular zones surrounding lateral root primordia and in some part of the root epidermis. Expressed also in the sepals and the cortical tissues of the stem, but not in the conducting bundles, the petals or the reproductive tissues.

It is found in the membrane. Its function is as follows. Involved in the translocation of tetra- and pentapeptides across the cellular membrane in an energy-dependent manner. May also transport cadmium complexes. This is Oligopeptide transporter 7 (OPT7) from Arabidopsis thaliana (Mouse-ear cress).